The sequence spans 283 residues: Bifunctional protein FolD (283 aa).

NADP(+) contacts are provided by residues 165–167 (GRS) and Ser190.

It belongs to the tetrahydrofolate dehydrogenase/cyclohydrolase family. In terms of assembly, homodimer.

The catalysed reaction is (6R)-5,10-methylene-5,6,7,8-tetrahydrofolate + NADP(+) = (6R)-5,10-methenyltetrahydrofolate + NADPH. It carries out the reaction (6R)-5,10-methenyltetrahydrofolate + H2O = (6R)-10-formyltetrahydrofolate + H(+). It functions in the pathway one-carbon metabolism; tetrahydrofolate interconversion. In terms of biological role, catalyzes the oxidation of 5,10-methylenetetrahydrofolate to 5,10-methenyltetrahydrofolate and then the hydrolysis of 5,10-methenyltetrahydrofolate to 10-formyltetrahydrofolate. This chain is Bifunctional protein FolD, found in Variovorax paradoxus (strain S110).